A 217-amino-acid polypeptide reads, in one-letter code: N-(5'-phosphoribosyl)anthranilate isomerase (217 aa).

This sequence belongs to the TrpF family.

It catalyses the reaction N-(5-phospho-beta-D-ribosyl)anthranilate = 1-(2-carboxyphenylamino)-1-deoxy-D-ribulose 5-phosphate. Its pathway is amino-acid biosynthesis; L-tryptophan biosynthesis; L-tryptophan from chorismate: step 3/5. In Synechococcus sp. (strain ATCC 27144 / PCC 6301 / SAUG 1402/1) (Anacystis nidulans), this protein is N-(5'-phosphoribosyl)anthranilate isomerase.